The following is a 56-amino-acid chain: Large ribosomal subunit protein bL32 (56 aa).

The segment at 1–28 (MAVQQNRKTRSKRGMRRSHDALTTAALS) is disordered. A compositionally biased stretch (basic residues) spans 7-16 (RKTRSKRGMR).

This sequence belongs to the bacterial ribosomal protein bL32 family.

This Vibrio vulnificus (strain CMCP6) protein is Large ribosomal subunit protein bL32.